The following is a 983-amino-acid chain: GPI ethanolamine phosphate transferase 2, catalytic subunit (983 aa).

Residues 1-431 (MRLGSGTFAT…SLSAQVAQYD (431 aa)) are Lumenal-facing. Asn194 is a glycosylation site (N-linked (GlcNAc...) asparagine). The next 12 helical transmembrane spans lie at 432 to 452 (IYSMMVGTVVVLEVLTLLLLS), 471 to 491 (GFSLLFYLVILVLSAVHVIVC), 506 to 526 (LAAGGVMVLASALLCVIVSVL), 552 to 572 (LLILLGTAGHVLSLGASSFVE), 699 to 719 (VLAALSLLVVFVLVQRGCSPV), 721 to 741 (KAALALGLLGVYCYRAAIGSV), 752 to 772 (ISKGIIEARFVYVFVLGILFT), 789 to 809 (LKTVGLWEIYSGLVLLAALLF), 812 to 832 (HNLPVLAFSLLIQTLMTKFIW), 879 to 899 (VEIPAVLLTAFGTYAGPVLWA), 919 to 939 (ACFCYALICSIPVFTYIVLVT), and 955 to 975 (LLYEGMHLLITAAVCVFFTAM).

It belongs to the PIGG/PIGN/PIGO family. PIGG subfamily. As to quaternary structure, part of the ethanolamine phosphate transferase 2 complex composed by PIGG and PIGF. PIGF is required to stabilize it. Competes with PIGO for the binding of PIGF.

It is found in the endoplasmic reticulum membrane. It participates in glycolipid biosynthesis; glycosylphosphatidylinositol-anchor biosynthesis. Its function is as follows. Catalytic subunit of the ethanolamine phosphate transferase 2 complex that transfers an ethanolamine phosphate (EtNP) from a phosphatidylethanolamine (PE) to the 6-OH position of the second alpha-1,6-linked mannose of a 6-PEtn-alpha-D-Man-(1-&gt;2)-alpha-D-Man-(1-&gt;6)-2-PEtn-alpha-D-Man-(1-&gt;4)-alpha-D-GlcN-(1-&gt;6)-(1-radyl,2-acyl-sn-glycero-3-phospho)-2-acyl-inositol (also termed H7) intermediate to generate a 6-PEtn-alpha-D-Man-(1-&gt;2)-6-PEtn-alpha-D-Man-(1-&gt;6)-2-PEtn-alpha-D-Man-(1-&gt;4)-alpha-D-GlcN-(1-&gt;6)-(1-radyl,2-acyl-sn-glycero-3-phospho)-2-acyl-inositol (also termed H8) and participates in the eleventh step of the glycosylphosphatidylinositol-anchor biosynthesis. This Homo sapiens (Human) protein is GPI ethanolamine phosphate transferase 2, catalytic subunit.